A 207-amino-acid polypeptide reads, in one-letter code: MGRCSGRCTLVGICCLQLAAALQRQIFDFLGYQWAPILANFLHIMVVILGILGTLHYRSRYLILYSIWLALWVAWNAFIICFYLEVGHFSQHRDLIMNFNTSMHRSWWMENGPGCLVTPVRGPPLPLADHHMVTVTGCLLDYPYIEALSSALQIFLALFGFVYACYVSKVFMDEEDSFDFIGSYDSYGYQAPMKTSHLQLQPLYKPG.

Helical transmembrane passes span 2–22 (GRCS…AAAL), 35–55 (APIL…LGTL), and 62–82 (LILY…IICF). N-linked (GlcNAc...) asparagine glycosylation occurs at Asn100. The helical transmembrane segment at 147-167 (ALSSALQIFLALFGFVYACYV) threads the bilayer.

Belongs to the NKAIN family. As to quaternary structure, interacts with atp1b1 C-terminus.

It is found in the cell membrane. The polypeptide is Sodium/potassium-transporting ATPase subunit beta-1-interacting protein 1 (nkain1) (Xenopus tropicalis (Western clawed frog)).